Reading from the N-terminus, the 257-residue chain is Imidazole glycerol phosphate synthase subunit HisF (257 aa).

Active-site residues include aspartate 12 and aspartate 131.

This sequence belongs to the HisA/HisF family. In terms of assembly, heterodimer of HisH and HisF.

Its subcellular location is the cytoplasm. The enzyme catalyses 5-[(5-phospho-1-deoxy-D-ribulos-1-ylimino)methylamino]-1-(5-phospho-beta-D-ribosyl)imidazole-4-carboxamide + L-glutamine = D-erythro-1-(imidazol-4-yl)glycerol 3-phosphate + 5-amino-1-(5-phospho-beta-D-ribosyl)imidazole-4-carboxamide + L-glutamate + H(+). Its pathway is amino-acid biosynthesis; L-histidine biosynthesis; L-histidine from 5-phospho-alpha-D-ribose 1-diphosphate: step 5/9. Functionally, IGPS catalyzes the conversion of PRFAR and glutamine to IGP, AICAR and glutamate. The HisF subunit catalyzes the cyclization activity that produces IGP and AICAR from PRFAR using the ammonia provided by the HisH subunit. This is Imidazole glycerol phosphate synthase subunit HisF from Burkholderia mallei (strain NCTC 10247).